The sequence spans 246 residues: Carboxy-S-adenosyl-L-methionine synthase (246 aa).

Residues Tyr-39, 64 to 66, 89 to 90, 121 to 122, Asn-136, and Arg-203 each bind S-adenosyl-L-methionine; these read GCS, DN, and DI.

It belongs to the class I-like SAM-binding methyltransferase superfamily. Cx-SAM synthase family. In terms of assembly, homodimer.

The enzyme catalyses prephenate + S-adenosyl-L-methionine = carboxy-S-adenosyl-L-methionine + 3-phenylpyruvate + H2O. Functionally, catalyzes the conversion of S-adenosyl-L-methionine (SAM) to carboxy-S-adenosyl-L-methionine (Cx-SAM). This Pseudomonas aeruginosa (strain UCBPP-PA14) protein is Carboxy-S-adenosyl-L-methionine synthase.